The chain runs to 71 residues: Pro-MCH (71 aa).

Positions 1–20 are cleaved as a signal peptide; the sequence is AKMSLSSYILILTLVLFSQG.

It belongs to the melanin-concentrating hormone family.

It localises to the secreted. The protein is Pro-MCH (PMCH) of Carlito syrichta (Philippine tarsier).